The chain runs to 128 residues: Transcription antitermination protein NusB (128 aa).

It belongs to the NusB family.

Functionally, involved in transcription antitermination. Required for transcription of ribosomal RNA (rRNA) genes. Binds specifically to the boxA antiterminator sequence of the ribosomal RNA (rrn) operons. The sequence is that of Transcription antitermination protein NusB from Staphylococcus haemolyticus (strain JCSC1435).